Consider the following 388-residue polypeptide: Chitinase 4 (388 aa).

Residues 22-375 (FKTCVYFSNW…KNFVDQLGGV (354 aa)) form the GH18 domain. Residues asparagine 30 and asparagine 82 are each glycosylated (N-linked (GlcNAc...) asparagine). Chitin is bound by residues 82–83 (NQ) and 109–112 (GGWG). Residues asparagine 123 and asparagine 132 are each glycosylated (N-linked (GlcNAc...) asparagine). Glutamate 151 serves as the catalytic Proton donor. Tyrosine 152 contacts chitin. An N-linked (GlcNAc...) asparagine glycan is attached at asparagine 155. Position 208–211 (208–211 (MCYD)) interacts with chitin. Asparagine 237 is a glycosylation site (N-linked (GlcNAc...) asparagine). Tryptophan 350 contributes to the chitin binding site.

This sequence belongs to the glycosyl hydrolase 18 family. Chitinase class V subfamily.

The protein localises to the secreted. It catalyses the reaction Random endo-hydrolysis of N-acetyl-beta-D-glucosaminide (1-&gt;4)-beta-linkages in chitin and chitodextrins.. Functionally, chitinase involved in the remodeling of chitin in the fungal cell wall. Plays a role in sporulation. The chain is Chitinase 4 (CHT4) from Candida albicans (strain SC5314 / ATCC MYA-2876) (Yeast).